Consider the following 640-residue polypeptide: Dextranase (640 aa).

The first 32 residues, 1–32 (MPGTGLGRLAKHVTAAAAVFLISTGAVLPAQA), serve as a signal peptide directing secretion.

This sequence belongs to the glycosyl hydrolase 49 family.

The protein resides in the secreted. The catalysed reaction is Endohydrolysis of (1-&gt;6)-alpha-D-glucosidic linkages in dextran.. This is Dextranase from Arthrobacter globiformis.